Reading from the N-terminus, the 279-residue chain is MATH domain and coiled-coil domain-containing protein At1g31390 (279 aa).

The MATH domain maps to 6–134 (EKKITWTIKN…NGDVKIVVEV (129 aa)). Residues 235–271 (KLDWLEKKLKEVCEARVQEIDEEWKDLTDLKENWSSD) adopt a coiled-coil conformation.

The protein is MATH domain and coiled-coil domain-containing protein At1g31390 of Arabidopsis thaliana (Mouse-ear cress).